A 426-amino-acid polypeptide reads, in one-letter code: MQVKLKVLLIGSGGRESAIAFYLRKSVLLSELKVFPGNGGFPDQELLPPDSFQVLDKNSVQSFLKQNPFDLIVVGPEDPLVAGFADWAAELNIPVFGPDSFCAQVEGSKDFAKSLMTEAKIPTAEYKTFSEYSDSLKYLESKSIPIVIKADGLAAGKGVTVATSKEMAQTALKEIFKDKKFGSSGNQVVIEEFMEGQEASIFAISDGDSYFLLPAAQDHKRAFDGDQGPNTGGMGAYCPAPVISESILQKVKEQIFDPMFDLFRKKGHPYRGLLYAGLMISPNGEPKVVEFNCRFGDPETQCVLAMLDGDLLELLYRASTGKIKGVQAAVKKGAAVVVVLAAQGYPDFYEKNIPLNLPETSGQNVHLFHAGTLKKDGKVFSSGGRILGIVAQGADLKSSVDQAYSFLEKIQAPKTFYRKDIGYRAL.

Residues 113-320 form the ATP-grasp domain; sequence KSLMTEAKIP…LLELLYRAST (208 aa). Residue 139–200 coordinates ATP; that stretch reads LESKSIPIVI…EEFMEGQEAS (62 aa). Mg(2+)-binding residues include Glu290 and Asn292.

It belongs to the GARS family. Mg(2+) is required as a cofactor. It depends on Mn(2+) as a cofactor.

It carries out the reaction 5-phospho-beta-D-ribosylamine + glycine + ATP = N(1)-(5-phospho-beta-D-ribosyl)glycinamide + ADP + phosphate + H(+). It participates in purine metabolism; IMP biosynthesis via de novo pathway; N(1)-(5-phospho-D-ribosyl)glycinamide from 5-phospho-alpha-D-ribose 1-diphosphate: step 2/2. This Leptospira interrogans serogroup Icterohaemorrhagiae serovar Lai (strain 56601) protein is Phosphoribosylamine--glycine ligase.